The chain runs to 310 residues: Aspartate carbamoyltransferase catalytic subunit (310 aa).

Residues Arg55 and Thr56 each contribute to the carbamoyl phosphate site. Lys85 contacts L-aspartate. Residues Arg106, His135, and Gln138 each coordinate carbamoyl phosphate. 2 residues coordinate L-aspartate: Arg168 and Arg230. Carbamoyl phosphate contacts are provided by Leu268 and Pro269.

This sequence belongs to the aspartate/ornithine carbamoyltransferase superfamily. ATCase family. Heterododecamer (2C3:3R2) of six catalytic PyrB chains organized as two trimers (C3), and six regulatory PyrI chains organized as three dimers (R2).

The catalysed reaction is carbamoyl phosphate + L-aspartate = N-carbamoyl-L-aspartate + phosphate + H(+). Its pathway is pyrimidine metabolism; UMP biosynthesis via de novo pathway; (S)-dihydroorotate from bicarbonate: step 2/3. Functionally, catalyzes the condensation of carbamoyl phosphate and aspartate to form carbamoyl aspartate and inorganic phosphate, the committed step in the de novo pyrimidine nucleotide biosynthesis pathway. The protein is Aspartate carbamoyltransferase catalytic subunit of Buchnera aphidicola subsp. Acyrthosiphon pisum (strain APS) (Acyrthosiphon pisum symbiotic bacterium).